A 37-amino-acid chain; its full sequence is uncharacterized protein (37 aa).

Residues 16-36 (FALIVVLFILLIIVGTAFVGG) traverse the membrane as a helical segment.

This sequence belongs to the SscA family.

Its subcellular location is the membrane. This is an uncharacterized protein from Bacillus subtilis (strain 168).